We begin with the raw amino-acid sequence, 354 residues long: Biotin synthase (354 aa).

The Radical SAM core domain occupies 40–258; it reads NEVQVSTLLS…IAVARILMPR (219 aa). [4Fe-4S] cluster-binding residues include Cys55, Cys59, and Cys62. [2Fe-2S] cluster contacts are provided by Cys99, Cys130, Cys190, and Arg262.

The protein belongs to the radical SAM superfamily. Biotin synthase family. As to quaternary structure, homodimer. Requires [4Fe-4S] cluster as cofactor. [2Fe-2S] cluster serves as cofactor.

The catalysed reaction is (4R,5S)-dethiobiotin + (sulfur carrier)-SH + 2 reduced [2Fe-2S]-[ferredoxin] + 2 S-adenosyl-L-methionine = (sulfur carrier)-H + biotin + 2 5'-deoxyadenosine + 2 L-methionine + 2 oxidized [2Fe-2S]-[ferredoxin]. It participates in cofactor biosynthesis; biotin biosynthesis; biotin from 7,8-diaminononanoate: step 2/2. Functionally, catalyzes the conversion of dethiobiotin (DTB) to biotin by the insertion of a sulfur atom into dethiobiotin via a radical-based mechanism. The polypeptide is Biotin synthase (Hahella chejuensis (strain KCTC 2396)).